The following is a 525-amino-acid chain: GMP synthase [glutamine-hydrolyzing] (525 aa).

Positions 9–207 (RILILDFGSQ…VKEICHCEAL (199 aa)) constitute a Glutamine amidotransferase type-1 domain. Cys86 functions as the Nucleophile in the catalytic mechanism. Catalysis depends on residues His181 and Glu183. Positions 208 to 400 (WTPATIIEDA…LGLPYNMLYR (193 aa)) constitute a GMPS ATP-PPase domain. 235 to 241 (SGGVDSS) provides a ligand contact to ATP.

Homodimer.

The catalysed reaction is XMP + L-glutamine + ATP + H2O = GMP + L-glutamate + AMP + diphosphate + 2 H(+). It functions in the pathway purine metabolism; GMP biosynthesis; GMP from XMP (L-Gln route): step 1/1. Its function is as follows. Catalyzes the synthesis of GMP from XMP. In Tolumonas auensis (strain DSM 9187 / NBRC 110442 / TA 4), this protein is GMP synthase [glutamine-hydrolyzing].